Consider the following 377-residue polypeptide: 5-hydroxytryptamine receptor 1D (377 aa).

Residues 1–23 (MSPLNQSAEGLPQEASNRSLNAT) form a disordered region. The Extracellular segment spans residues 1–38 (MSPLNQSAEGLPQEASNRSLNATETSEAWDPRTLQALK). Residues asparagine 5, asparagine 17, and asparagine 21 are each glycosylated (N-linked (GlcNAc...) asparagine). Residues 39–64 (ISLAVVLSVITLATVLSNAFVLTTIL) traverse the membrane as a helical segment. At 65-75 (LTRKLHTPANY) the chain is on the cytoplasmic side. Residues 76–97 (LIGSLATTDLLVSILVMPISIA) form a helical membrane-spanning segment. The Extracellular portion of the chain corresponds to 98-109 (YTITHTWNFGQI). A helical transmembrane segment spans residues 110-134 (LCDIWLSSDITCCTASILHLCVIAL). Residues cysteine 111 and cysteine 188 are joined by a disulfide bond. Serotonin is bound by residues aspartate 118 and cysteine 122. The short motif at 135-137 (DRY) is the DRY motif; important for ligand-induced conformation changes element. At 135–154 (DRYWAITDALEYSKRRTAGH) the chain is on the cytoplasmic side. The helical transmembrane segment at 155-176 (AATMIAIVWAISICISIPPLFW) threads the bilayer. The Extracellular segment spans residues 177 to 194 (RQAKAQEEMSDCLVNTSQ). The chain crosses the membrane as a helical span at residues 195–218 (ISYTIYSTCGAFYIPSVLLIILYG). The Cytoplasmic portion of the chain corresponds to 219–300 (RIYRAARNRI…ISAARERKAT (82 aa)). Residues 301–326 (KILGIILGAFIICWLPFFVVSLVLPI) traverse the membrane as a helical segment. Serine 321 is a binding site for serotonin. The Extracellular portion of the chain corresponds to 327–335 (CRDSCWIHP). Residues 336 to 359 (ALFDFFTWLGYLNSLINPIIYTVF) form a helical membrane-spanning segment. Positions 352–356 (NPIIY) match the NPxxY motif; important for ligand-induced conformation changes and signaling motif. The Cytoplasmic segment spans residues 360–377 (NEEFRQAFQKIVPFRKAS).

It belongs to the G-protein coupled receptor 1 family. Homodimer. Heterodimer with HTR1B. As to expression, detected in brain neocortex and caudate nucleus (at protein level).

The protein localises to the cell membrane. Functionally, G-protein coupled receptor for 5-hydroxytryptamine (serotonin). Also functions as a receptor for ergot alkaloid derivatives, various anxiolytic and antidepressant drugs and other psychoactive substances. Ligand binding causes a conformation change that triggers signaling via guanine nucleotide-binding proteins (G proteins) and modulates the activity of downstream effectors, such as adenylate cyclase. HTR1D is coupled to G(i)/G(o) G alpha proteins and mediates inhibitory neurotransmission by inhibiting adenylate cyclase activity. Regulates the release of 5-hydroxytryptamine in the brain, and thereby affects neural activity. May also play a role in regulating the release of other neurotransmitters. May play a role in vasoconstriction. This is 5-hydroxytryptamine receptor 1D from Homo sapiens (Human).